Reading from the N-terminus, the 117-residue chain is UPF0145 protein CV_4322 (117 aa).

This sequence belongs to the UPF0145 family.

This Chromobacterium violaceum (strain ATCC 12472 / DSM 30191 / JCM 1249 / CCUG 213 / NBRC 12614 / NCIMB 9131 / NCTC 9757 / MK) protein is UPF0145 protein CV_4322.